The primary structure comprises 365 residues: Ribosomal RNA large subunit methyltransferase F (365 aa).

Residues 1-50 form a disordered region; it reads MSKPAVKSVPSATAKTATRAANPRQKAKAPKQAKPEGKGRAKPSKDKPRA. The segment covering 33–50 has biased composition (basic and acidic residues); sequence AKPEGKGRAKPSKDKPRA.

Belongs to the methyltransferase superfamily. METTL16/RlmF family.

The protein resides in the cytoplasm. The catalysed reaction is adenosine(1618) in 23S rRNA + S-adenosyl-L-methionine = N(6)-methyladenosine(1618) in 23S rRNA + S-adenosyl-L-homocysteine + H(+). In terms of biological role, specifically methylates the adenine in position 1618 of 23S rRNA. This Shewanella baltica (strain OS195) protein is Ribosomal RNA large subunit methyltransferase F.